Reading from the N-terminus, the 963-residue chain is Vacuolar membrane protease (963 aa).

At 1–15 the chain is on the cytoplasmic side; the sequence is MVSSRRGFNPIAFTP. The helical transmembrane segment at 16–36 threads the bilayer; that stretch reads WPVTILTSLVYLALIIPIIVV. Topologically, residues 37-391 are vacuolar; that stretch reads HHLVPPAPKQ…FQLNTLFGLS (355 aa). 2 N-linked (GlcNAc...) asparagine glycosylation sites follow: asparagine 111 and asparagine 114. Residues histidine 170 and aspartate 182 each contribute to the Zn(2+) site. The active-site Proton acceptor is the glutamate 216. 3 residues coordinate Zn(2+): glutamate 217, glutamate 242, and histidine 315. A helical membrane pass occupies residues 392–412; it reads VALLVVAPLLLILTSVALFAV. Over 413-441 the chain is Cytoplasmic; sequence DKMYMFSMYTYLSESGGQVSLYGLRGMFR. A helical membrane pass occupies residues 442-462; that stretch reads FPLILGISTALTVALAFLIMK. Over 463–473 the chain is Vacuolar; that stretch reads VNPFIIYSSPY. Residues 474–494 form a helical membrane-spanning segment; that stretch reads AVWSMMLSTCMFFAWFISCVA. Over 495 to 504 the chain is Cytoplasmic; the sequence is DFARPSALHR. Residues 505–525 form a helical membrane-spanning segment; that stretch reads AYAFSWMFGILWVFLVIATVY. At 526-535 the chain is on the vacuolar side; the sequence is QRQHGIASSY. The chain crosses the membrane as a helical span at residues 536 to 556; the sequence is FIVFYFAGVSVATWISYLELF. Over 557 to 668 the chain is Cytoplasmic; it reads GLSTTQDYAR…WSIYLVSSAW (112 aa). The interval 569–618 is disordered; that stretch reads SRLSDRTPSSDSHLLAPSADELPSSGSVAGRDFNPEDVEDEEPTESTSLL. Over residues 603–612 the composition is skewed to acidic residues; the sequence is PEDVEDEEPT. A helical transmembrane segment spans residues 669-689; sequence ILQFLLVAPIVLILLGQLGLF. Residues 690–705 lie on the Vacuolar side of the membrane; that stretch reads LTSATYQIGADGGSQF. A helical transmembrane segment spans residues 706–726; that stretch reads IIYIGIAVLSVLILLPLFPFI. Residues 727–732 lie on the Cytoplasmic side of the membrane; the sequence is HRFTYH. The chain crosses the membrane as a helical span at residues 733–753; it reads IPTFMLFVLIGTLVYNLTAFP. The Vacuolar segment spans residues 754–963; the sequence is FSHNSRLKVA…LVEGSYSFKL (210 aa). Asparagine 835 carries N-linked (GlcNAc...) asparagine glycosylation.

Belongs to the peptidase M28 family. It depends on Zn(2+) as a cofactor.

The protein localises to the vacuole membrane. Its function is as follows. May be involved in vacuolar sorting and osmoregulation. This Arthroderma gypseum (strain ATCC MYA-4604 / CBS 118893) (Microsporum gypseum) protein is Vacuolar membrane protease.